Here is a 402-residue protein sequence, read N- to C-terminus: Deoxyguanosinetriphosphate triphosphohydrolase-like protein (402 aa).

Positions 73–217 constitute an HD domain; sequence RLTHTIEVAQ…AAIADDIAYN (145 aa).

It belongs to the dGTPase family. Type 2 subfamily.

This Brucella suis (strain ATCC 23445 / NCTC 10510) protein is Deoxyguanosinetriphosphate triphosphohydrolase-like protein.